The chain runs to 241 residues: Small ribosomal subunit protein uS2 (241 aa).

Belongs to the universal ribosomal protein uS2 family.

The protein is Small ribosomal subunit protein uS2 of Pectobacterium atrosepticum (strain SCRI 1043 / ATCC BAA-672) (Erwinia carotovora subsp. atroseptica).